The chain runs to 407 residues: Carbamoyl phosphate synthase small chain (407 aa).

Residues 1-205 (MTETTPKTAP…LQDGYGEQDA (205 aa)) are CPSase. L-glutamine is bound by residues serine 60, glycine 257, and glycine 259. The Glutamine amidotransferase type-1 domain occupies 209–397 (HVVALDFGVK…INLIRERKGQ (189 aa)). The active-site Nucleophile is cysteine 286. 5 residues coordinate L-glutamine: leucine 287, glutamine 290, asparagine 328, glycine 330, and phenylalanine 331. Active-site residues include histidine 370 and glutamate 372.

The protein belongs to the CarA family. As to quaternary structure, composed of two chains; the small (or glutamine) chain promotes the hydrolysis of glutamine to ammonia, which is used by the large (or ammonia) chain to synthesize carbamoyl phosphate. Tetramer of heterodimers (alpha,beta)4.

The catalysed reaction is hydrogencarbonate + L-glutamine + 2 ATP + H2O = carbamoyl phosphate + L-glutamate + 2 ADP + phosphate + 2 H(+). The enzyme catalyses L-glutamine + H2O = L-glutamate + NH4(+). Its pathway is amino-acid biosynthesis; L-arginine biosynthesis; carbamoyl phosphate from bicarbonate: step 1/1. The protein operates within pyrimidine metabolism; UMP biosynthesis via de novo pathway; (S)-dihydroorotate from bicarbonate: step 1/3. Its function is as follows. Small subunit of the glutamine-dependent carbamoyl phosphate synthetase (CPSase). CPSase catalyzes the formation of carbamoyl phosphate from the ammonia moiety of glutamine, carbonate, and phosphate donated by ATP, constituting the first step of 2 biosynthetic pathways, one leading to arginine and/or urea and the other to pyrimidine nucleotides. The small subunit (glutamine amidotransferase) binds and cleaves glutamine to supply the large subunit with the substrate ammonia. This Brucella suis (strain ATCC 23445 / NCTC 10510) protein is Carbamoyl phosphate synthase small chain.